We begin with the raw amino-acid sequence, 119 residues long: Large ribosomal subunit protein uL14 (119 aa).

The protein belongs to the universal ribosomal protein uL14 family. In terms of assembly, part of the 50S ribosomal subunit. Forms a cluster with proteins L3 and L19. In the 70S ribosome, L14 and L19 interact and together make contacts with the 16S rRNA in bridges B5 and B8.

Binds to 23S rRNA. Forms part of two intersubunit bridges in the 70S ribosome. The protein is Large ribosomal subunit protein uL14 of Wolbachia pipientis subsp. Culex pipiens (strain wPip).